A 635-amino-acid polypeptide reads, in one-letter code: Threonine--tRNA ligase (635 aa).

Residues 1 to 61 (MVSIRLPDGS…DHDASLAIVT (61 aa)) form the TGS domain. A catalytic region spans residues 242–533 (DHRKLGKQLD…LIEHHAGAMP (292 aa)). Zn(2+) contacts are provided by cysteine 333, histidine 384, and histidine 510.

This sequence belongs to the class-II aminoacyl-tRNA synthetase family. As to quaternary structure, homodimer. Zn(2+) serves as cofactor.

The protein resides in the cytoplasm. The enzyme catalyses tRNA(Thr) + L-threonine + ATP = L-threonyl-tRNA(Thr) + AMP + diphosphate + H(+). Catalyzes the attachment of threonine to tRNA(Thr) in a two-step reaction: L-threonine is first activated by ATP to form Thr-AMP and then transferred to the acceptor end of tRNA(Thr). Also edits incorrectly charged L-seryl-tRNA(Thr). The sequence is that of Threonine--tRNA ligase from Burkholderia multivorans (strain ATCC 17616 / 249).